A 208-amino-acid polypeptide reads, in one-letter code: Thymidylate kinase (208 aa).

10–17 (GGEGVGKS) is a binding site for ATP.

Belongs to the thymidylate kinase family.

It carries out the reaction dTMP + ATP = dTDP + ADP. Phosphorylation of dTMP to form dTDP in both de novo and salvage pathways of dTTP synthesis. The sequence is that of Thymidylate kinase from Rhizorhabdus wittichii (strain DSM 6014 / CCUG 31198 / JCM 15750 / NBRC 105917 / EY 4224 / RW1) (Sphingomonas wittichii).